We begin with the raw amino-acid sequence, 453 residues long: Carbamoyl phosphate synthase arginine-specific small chain (453 aa).

A mitochondrion-targeting transit peptide spans 1–28 (MFARVFKAMPARAPAFTSVNASIQSRFM). The Glutamine amidotransferase type-1 domain occupies 219–406 (HVAVIDCGVK…LDSVVKYKNH (188 aa)). Catalysis depends on C295, which acts as the Nucleophile. Catalysis depends on residues H379 and E381.

It belongs to the CarA family. Heterodimer composed of 2 chains; the small (or glutamine) chain promotes the hydrolysis of glutamine to ammonia, which is used by the large (or ammonia) chain to synthesize carbamoyl phosphate.

It is found in the mitochondrion matrix. It catalyses the reaction hydrogencarbonate + L-glutamine + 2 ATP + H2O = carbamoyl phosphate + L-glutamate + 2 ADP + phosphate + 2 H(+). It carries out the reaction L-glutamine + H2O = L-glutamate + NH4(+). It participates in amino-acid biosynthesis; L-arginine biosynthesis; carbamoyl phosphate from bicarbonate: step 1/1. Its function is as follows. Small subunit of the arginine-specific carbamoyl phosphate synthase (CPSase). CPSase catalyzes the formation of carbamoyl phosphate from the ammonia moiety of glutamine, carbonate, and phosphate donated by ATP, the first step of the arginine biosynthetic pathway. The small subunit (glutamine amidotransferase) binds and cleaves glutamine to supply the large subunit with the substrate ammonia. The protein is Carbamoyl phosphate synthase arginine-specific small chain (cpa1) of Aspergillus niger (strain ATCC MYA-4892 / CBS 513.88 / FGSC A1513).